The primary structure comprises 562 residues: Phosphomethylpyrimidine synthase (562 aa).

Substrate-binding positions include N179, M208, Y237, H273, 293-295, 334-337, and E373; these read SRG and DGLR. Position 377 (H377) interacts with Zn(2+). Y400 is a substrate binding site. H441 lines the Zn(2+) pocket. Residues C521, C524, and C529 each coordinate [4Fe-4S] cluster.

Belongs to the ThiC family. [4Fe-4S] cluster is required as a cofactor.

It carries out the reaction 5-amino-1-(5-phospho-beta-D-ribosyl)imidazole + S-adenosyl-L-methionine = 4-amino-2-methyl-5-(phosphooxymethyl)pyrimidine + CO + 5'-deoxyadenosine + formate + L-methionine + 3 H(+). It functions in the pathway cofactor biosynthesis; thiamine diphosphate biosynthesis. Its function is as follows. Catalyzes the synthesis of the hydroxymethylpyrimidine phosphate (HMP-P) moiety of thiamine from aminoimidazole ribotide (AIR) in a radical S-adenosyl-L-methionine (SAM)-dependent reaction. The polypeptide is Phosphomethylpyrimidine synthase (Geobacillus kaustophilus (strain HTA426)).